The sequence spans 138 residues: Putative nickel-responsive regulator (138 aa).

Histidine 78, histidine 89, histidine 91, and cysteine 97 together coordinate Ni(2+).

The protein belongs to the transcriptional regulatory CopG/NikR family. It depends on Ni(2+) as a cofactor.

In terms of biological role, transcriptional regulator. This Pyrococcus abyssi (strain GE5 / Orsay) protein is Putative nickel-responsive regulator.